Reading from the N-terminus, the 293-residue chain is Elongation factor Ts (293 aa).

An involved in Mg(2+) ion dislocation from EF-Tu region spans residues 81–84 (TDFV).

This sequence belongs to the EF-Ts family.

Its subcellular location is the cytoplasm. Associates with the EF-Tu.GDP complex and induces the exchange of GDP to GTP. It remains bound to the aminoacyl-tRNA.EF-Tu.GTP complex up to the GTP hydrolysis stage on the ribosome. The chain is Elongation factor Ts from Thioalkalivibrio sulfidiphilus (strain HL-EbGR7).